Reading from the N-terminus, the 453-residue chain is DDB1- and CUL4-associated factor 12 (453 aa).

Basic residues predominate over residues 1 to 12 (MARKVVSRKRKA). The disordered stretch occupies residues 1-34 (MARKVVSRKRKAPASPGAGSDAQGPQFGWDHSLH). A required for nuclear location and interaction with MOV10 region spans residues 1–38 (MARKVVSRKRKAPASPGAGSDAQGPQFGWDHSLHKRKR). A Phosphoserine modification is found at serine 15. 6 WD repeats span residues 81–122 (EREF…TSQI), 123–175 (TKIP…TLDP), 176–242 (VCVG…ALKD), 243–286 (IPKE…NTLS), 287–331 (KLLS…SYNV), and 332–366 (KSVCSRERGSGIRSVSFYEHIITVGTGQGSLLFYD).

The protein belongs to the WD repeat DCAF12 family. As to quaternary structure, component of the DCX(DCAF12) E3 ubiquitin ligase complex, at least composed of CUL4 (CUL4A or CUL4B), DDB1, DCAF12 and RBX1. In terms of tissue distribution, highly expressed in lung cancer tissues and some cancer cell lines. Restricted expression in normal testis.

Its subcellular location is the cytoplasm. It localises to the cytoskeleton. The protein localises to the microtubule organizing center. It is found in the centrosome. The protein resides in the nucleus. The protein operates within protein modification; protein ubiquitination. Its function is as follows. Substrate-recognition component of a DCX (DDB1-CUL4-X-box) E3 ubiquitin-protein ligase complex of the DesCEND (destruction via C-end degrons) pathway, which recognizes a C-degron located at the extreme C terminus of target proteins, leading to their ubiquitination and degradation. The C-degron recognized by the DesCEND pathway is usually a motif of less than ten residues and can be present in full-length proteins, truncated proteins or proteolytically cleaved forms. The DCX(DCAF12) complex specifically recognizes proteins with a diglutamate (Glu-Glu) at the C-terminus, such as MAGEA3, MAGEA6 and CCT5, leading to their ubiquitination and degradation. Ubiquitination of MAGEA3, MAGEA6 by DCX(DCAF12) complex is required for starvation-induced autophagy. Also directly recognizes the C-terminal glutamate-leucine (Glu-Leu) degron as an alternative degron in proteins such as MOV10, leading to their ubiquitination and degradation. Controls the protein level of MOV10 during spermatogenesis and in T cells, especially after their activation. The polypeptide is DDB1- and CUL4-associated factor 12 (Homo sapiens (Human)).